A 532-amino-acid chain; its full sequence is 2,3-bisphosphoglycerate-independent phosphoglycerate mutase (532 aa).

2 residues coordinate Mn(2+): Asp15 and Ser65. The active-site Phosphoserine intermediate is Ser65. Residues His126, 156-157, Arg188, Arg194, 258-261, and Lys331 contribute to the substrate site; these read RD and RPDR. Mn(2+) is bound by residues Asp398, His402, Asp439, His440, and His457.

This sequence belongs to the BPG-independent phosphoglycerate mutase family. Monomer. Requires Mn(2+) as cofactor.

The enzyme catalyses (2R)-2-phosphoglycerate = (2R)-3-phosphoglycerate. Its pathway is carbohydrate degradation; glycolysis; pyruvate from D-glyceraldehyde 3-phosphate: step 3/5. Functionally, catalyzes the interconversion of 2-phosphoglycerate and 3-phosphoglycerate. The sequence is that of 2,3-bisphosphoglycerate-independent phosphoglycerate mutase from Cyanothece sp. (strain PCC 7425 / ATCC 29141).